The sequence spans 188 residues: Putative ankyrin repeat protein FPV230 (188 aa).

ANK repeat units lie at residues 2 to 31, 36 to 65, 135 to 164, and 168 to 187; these read ENEL…NPNA, KYMI…DANV, LGST…DINI, and NNNT…YLKC.

The chain is Putative ankyrin repeat protein FPV230 from Vertebrata (FPV).